We begin with the raw amino-acid sequence, 294 residues long: Glycine N-acyltransferase-like protein 2 (294 aa).

N6-acetyllysine is present on lysine 19.

This sequence belongs to the glycine N-acyltransferase family. Acetylation at Lys-19 drastically decreases the production of N-oleoyl and N-arachidonoyl glycines. As to expression, expressed at highest levels in salivary gland and trachea. Also detected in thyroid gland, spinal cord, prostate, lung and fetal brain.

It is found in the endoplasmic reticulum. The catalysed reaction is an acyl-CoA + glycine = an N-acylglycine + CoA + H(+). It carries out the reaction (9Z)-hexadecenoyl-CoA + glycine = N-(9Z-hexadecenoyl)-glycine + CoA + H(+). It catalyses the reaction octadecanoyl-CoA + glycine = N-octadecanoylglycine + CoA + H(+). The enzyme catalyses (5Z,8Z,11Z,14Z)-eicosatetraenoyl-CoA + glycine = N-(5Z,8Z,11Z,14Z)-eicosatetraenoyl-glycine + CoA + H(+). The catalysed reaction is (9Z)-octadecenoyl-CoA + glycine = N-(9Z-octadecenoyl)glycine + CoA + H(+). It carries out the reaction octanoyl-CoA + glycine = N-octanoylglycine + CoA + H(+). It catalyses the reaction decanoyl-CoA + glycine = N-decanoylglycine + CoA + H(+). The enzyme catalyses tetradecanoyl-CoA + glycine = N-tetradecanoylglycine + CoA + H(+). The catalysed reaction is dodecanoyl-CoA + glycine = N-dodecanoylglycine + CoA + H(+). It carries out the reaction (9Z,12Z)-octadecadienoyl-CoA + glycine = N-(9Z,12Z-octadecadienoyl)-glycine + CoA + H(+). It catalyses the reaction a fatty acyl-CoA + glycine = an N-(fatty acyl)-glycine + CoA + H(+). Functionally, mitochondrial acyltransferase which transfers the acyl group to the N-terminus of glycine. Conjugates numerous substrates, such as arachidonoyl-CoA and saturated medium and long-chain acyl-CoAs ranging from chain-length C8:0-CoA to C18:0-CoA, to form a variety of N-acylglycines. Shows a preference for monounsaturated fatty acid oleoyl-CoA (C18:1-CoA) as an acyl donor. Does not exhibit any activity toward C22:6-CoA and chenodeoxycholoyl-CoA, nor toward serine or alanine. This Homo sapiens (Human) protein is Glycine N-acyltransferase-like protein 2.